Reading from the N-terminus, the 260-residue chain is Ubiquinone/menaquinone biosynthesis C-methyltransferase UbiE (260 aa).

Residues T83, D104, 132–133 (NA), and S149 each bind S-adenosyl-L-methionine.

Belongs to the class I-like SAM-binding methyltransferase superfamily. MenG/UbiE family.

It carries out the reaction a 2-demethylmenaquinol + S-adenosyl-L-methionine = a menaquinol + S-adenosyl-L-homocysteine + H(+). The enzyme catalyses a 2-methoxy-6-(all-trans-polyprenyl)benzene-1,4-diol + S-adenosyl-L-methionine = a 5-methoxy-2-methyl-3-(all-trans-polyprenyl)benzene-1,4-diol + S-adenosyl-L-homocysteine + H(+). It participates in quinol/quinone metabolism; menaquinone biosynthesis; menaquinol from 1,4-dihydroxy-2-naphthoate: step 2/2. The protein operates within cofactor biosynthesis; ubiquinone biosynthesis. Its function is as follows. Methyltransferase required for the conversion of demethylmenaquinol (DMKH2) to menaquinol (MKH2) and the conversion of 2-polyprenyl-6-methoxy-1,4-benzoquinol (DDMQH2) to 2-polyprenyl-3-methyl-6-methoxy-1,4-benzoquinol (DMQH2). This chain is Ubiquinone/menaquinone biosynthesis C-methyltransferase UbiE, found in Vibrio cholerae serotype O1 (strain ATCC 39315 / El Tor Inaba N16961).